A 508-amino-acid polypeptide reads, in one-letter code: Bestrophin-2 (508 aa).

Residues 1–31 (MTVTYTARVANARFGGFSQLLLLWRGSIYKL) are Cytoplasmic-facing. Residue A10 coordinates Ca(2+). The helical transmembrane segment at 32–51 (LWRELLCFLGLYMALSAAYR) threads the bilayer. The Extracellular segment spans residues 52-60 (FLLAEEQKR). A helical membrane pass occupies residues 61 to 82 (YFEKLVIYCDQYASLIPVSFVL). The Cytoplasmic segment spans residues 83–238 (GFYVTLVVHR…WISIPLVYTQ (156 aa)). Residues 239-255 (VVTIAVYSYFLACLIGR) form a helical membrane-spanning segment. Residues 256–274 (QFLDPAQGYKDHTLDLCVP) lie on the Extracellular side of the membrane. Residues 275–288 (IFTLLQFFFYAGWL) form a helical membrane-spanning segment. Over 289-508 (KVAEQLINPF…PIGEEEESPA (220 aa)) the chain is Cytoplasmic. Q293, N296, D301, and D304 together coordinate Ca(2+). Residues 455–508 (LREPELEPPACPEPPAPIPGPTPEPFTTVSIPGPRAPAPPWLPSPIGEEEESPA) form a disordered region. Composition is skewed to pro residues over residues 461-478 (EPPACPEPPAPIPGPTPE) and 488-497 (PRAPAPPWLP).

The protein belongs to the anion channel-forming bestrophin (TC 1.A.46) family. Calcium-sensitive chloride channel subfamily. As to quaternary structure, pentamer. Interacts with GLUL; this interaction tethers a fraction of GLUL to the membrane, causing a decrease of cytosolic glutamine synthase (GS) activity and inhibits the chloride channel activity of BEST2 by affecting the gating at the aperture in the absence of intracellular glutamate. In terms of tissue distribution, expressed in mucin-secreting colonic goblet cells.

The protein localises to the cell membrane. It is found in the basolateral cell membrane. It carries out the reaction chloride(in) = chloride(out). The enzyme catalyses hydrogencarbonate(in) = hydrogencarbonate(out). The catalysed reaction is L-glutamate(out) = L-glutamate(in). It catalyses the reaction iodide(out) = iodide(in). It carries out the reaction L-glutamine(out) = L-glutamine(in). With respect to regulation, chloride channel activity is allosterically inhibited by GLUL/glutamine synthase (GS) which affects the gating at the aperture in the absence of intracellular glutamate. Inhibitory effect of GLUL is relieved upon increasing of intracellular level of L-glutamate. Its function is as follows. Ligand-gated anion channel that allows the movement of anions across cell membranes when activated by calcium (Ca2+). Transports a large specter of anions, namely mediates the movement of chloride, L-glutamate and iodide. Calcium-binding triggers the dilation of the aperture, but calcium-dependent gating is only effective when the size of the passing anion is bigger than the closed aperture. Mediates the calcium-activated hydrogencarbonate movement and participates in colonic hydrogencarbonate secretion concomitant with mucin secretion. In non-pigmented epithelium (NPE), mediates the efflux of intracellular L-glutamate; binding of intracellular L-glutamate activates and open both the neck and the aperture of the channel, leading to L-glutamate exit promoting chloride influx movement from the extracellular side in trans. Also exhibits a directional permeability for intracellular glutamine, in a similar manner as for L-glutamate. This Mus musculus (Mouse) protein is Bestrophin-2.